We begin with the raw amino-acid sequence, 179 residues long: Translation initiation factor IF-3 (179 aa).

Belongs to the IF-3 family. In terms of assembly, monomer.

It is found in the cytoplasm. Functionally, IF-3 binds to the 30S ribosomal subunit and shifts the equilibrium between 70S ribosomes and their 50S and 30S subunits in favor of the free subunits, thus enhancing the availability of 30S subunits on which protein synthesis initiation begins. This Buchnera aphidicola subsp. Acyrthosiphon pisum (strain APS) (Acyrthosiphon pisum symbiotic bacterium) protein is Translation initiation factor IF-3.